A 307-amino-acid chain; its full sequence is Probable 2-methylisocitrate lyase 2 (307 aa).

53–55 (SGA) is a binding site for substrate. Mg(2+) is bound by residues aspartate 92 and aspartate 94. Substrate-binding positions include 129–130 (CG), arginine 164, glutamate 194, 216–218 (NMT), arginine 247, and arginine 276.

The protein belongs to the isocitrate lyase/PEP mutase superfamily. Methylisocitrate lyase family. As to quaternary structure, homotetramer; dimer of dimers. The cofactor is Mg(2+).

The enzyme catalyses (2S,3R)-3-hydroxybutane-1,2,3-tricarboxylate = pyruvate + succinate. It participates in organic acid metabolism; propanoate degradation. Its function is as follows. Involved in the catabolism of short chain fatty acids (SCFA) via the 2-methylcitrate cycle I (propionate degradation route). Catalyzes the thermodynamically favored C-C bond cleavage of (2R,3S)-2-methylisocitrate to yield pyruvate and succinate via an alpha-carboxy-carbanion intermediate. The polypeptide is Probable 2-methylisocitrate lyase 2 (Corynebacterium glutamicum (strain ATCC 13032 / DSM 20300 / JCM 1318 / BCRC 11384 / CCUG 27702 / LMG 3730 / NBRC 12168 / NCIMB 10025 / NRRL B-2784 / 534)).